Here is a 260-residue protein sequence, read N- to C-terminus: Sulfoquinovose 1-dehydrogenase (260 aa).

Catalysis depends on Tyr-160, which acts as the Proton acceptor.

Belongs to the short-chain dehydrogenases/reductases (SDR) family.

It catalyses the reaction 6-sulfo-D-quinovose + NAD(+) = 6-deoxy-6-sulfo-D-glucono-1,5-lactone + NADH + H(+). Its function is as follows. Catalyzes the oxidation of sulfoquinovose to 6-deoxy-6-sulfo-D-glucono-1,5-lactone, with a strong preference for NAD(+) as the electron acceptor. Is involved in a degradation pathway of sulfoquinovose (SQ) that allows P.putida SQ1 to use SQ as the sole carbon and energy source for growth. The protein is Sulfoquinovose 1-dehydrogenase of Pseudomonas putida (Arthrobacter siderocapsulatus).